Here is an 80-residue protein sequence, read N- to C-terminus: 17 kDa surface antigen (80 aa).

Residues 47–58 (ALETTPSGTSIE) show a composition bias toward polar residues. The interval 47–80 (ALETTPSGTSIEWRNPDNGNYGYVTPSKTYKNST) is disordered.

It belongs to the rickettsiale 17 kDa surface antigen family.

It is found in the cell outer membrane. In Rickettsia canadensis, this protein is 17 kDa surface antigen (omp).